The sequence spans 475 residues: MNFSDIYHSDEEYFRKLKDLKAVHEETMSKLEKMYQDKLNIKDIQAGFIRDGISDSSSSSASEKSCSHPALSVTSLSEPDLDGSSSLSTTTDEGLPDLEEKTPGESSAMVHAQELINNMWNDFSVEDYIQYDSDSRTAKKKRKKAKSLTPKITVPVPFEMTVREQNRREKALSARSDLETKLLKRDEDDAECKKKFRANPVPSCVLLPLYEDLVKQSEERRKKARERNRAALLASLKPFKFIAREEQKQAVREKKLRDLFRAKRKTNQFKAKPVPRFIYRPAASDKPKEEELYGDSRMLPKVRDLLQNSPWPSRSACRRFRDPRSPAKPRGKHRRRCLRRDGDLEKWKEPFSEYSFLKCPMLCEECCLHESPCDSDKRQKLLADIRADEEILRETRRPGRSPRRKSPGRSSNPKPRPHECSPPMPTASSRGREQAIRRSEKARMREYWQELEEQEEKLQKRPMLFERVTQVVFIG.

The tract at residues 53–107 (ISDSSSSSASEKSCSHPALSVTSLSEPDLDGSSSLSTTTDEGLPDLEEKTPGESS) is disordered. 2 stretches are compositionally biased toward low complexity: residues 54–64 (SDSSSSSASEK) and 82–93 (DGSSSLSTTTDE). Residues 162–234 (VREQNRREKA…RERNRAALLA (73 aa)) are a coiled coil. The segment at 255 to 434 (KLRDLFRAKR…PTASSRGREQ (180 aa)) is required for interaction with CFAP418. The disordered stretch occupies residues 314-337 (RSACRRFRDPRSPAKPRGKHRRRC). Residues 327–337 (AKPRGKHRRRC) are compositionally biased toward basic residues. Lys377 is covalently cross-linked (Glycyl lysine isopeptide (Lys-Gly) (interchain with G-Cter in SUMO2)). The segment at 389 to 441 (EEILRETRRPGRSPRRKSPGRSSNPKPRPHECSPPMPTASSRGREQAIRRSEK) is disordered. Basic residues predominate over residues 398–407 (PGRSPRRKSP). Over residues 430 to 441 (RGREQAIRRSEK) the composition is skewed to basic and acidic residues.

This sequence belongs to the FAM161 family. As to quaternary structure, interacts (via central region) with CFAP418 (via N-terminus); the interaction is direct. Interacts (via C-terminus) with microtubules. Interacts with LCA5. Interacts with CEP290. Interacts with SDCCAG8. Interacts with FAM161B. Interacts with POC1B. Interacts with CEP78. Forms a microtubule-associated complex with POC5, CETN2 and POC1B. Interacts with CCDC15. As to expression, expressed in the retina.

Its subcellular location is the cytoplasm. The protein localises to the cytoskeleton. It localises to the cilium basal body. The protein resides in the cell projection. It is found in the cilium. Its subcellular location is the microtubule organizing center. The protein localises to the centrosome. It localises to the centriole. Functionally, involved in ciliogenesis. The sequence is that of Protein FAM161A from Mus musculus (Mouse).